The chain runs to 256 residues: Pimeloyl-[acyl-carrier protein] methyl ester esterase (256 aa).

One can recognise an AB hydrolase-1 domain in the interval histidine 15–proline 242. Substrate contacts are provided by residues tryptophan 22, serine 82–leucine 83, and phenylalanine 143–glutamine 147. Catalysis depends on serine 82, which acts as the Nucleophile. Catalysis depends on residues aspartate 207 and histidine 235. Histidine 235 is a substrate binding site.

Belongs to the AB hydrolase superfamily. Carboxylesterase BioH family. In terms of assembly, monomer.

The protein localises to the cytoplasm. It carries out the reaction 6-carboxyhexanoyl-[ACP] methyl ester + H2O = 6-carboxyhexanoyl-[ACP] + methanol + H(+). The protein operates within cofactor biosynthesis; biotin biosynthesis. In terms of biological role, the physiological role of BioH is to remove the methyl group introduced by BioC when the pimeloyl moiety is complete. It allows to synthesize pimeloyl-ACP via the fatty acid synthetic pathway through the hydrolysis of the ester bonds of pimeloyl-ACP esters. In Escherichia coli O127:H6 (strain E2348/69 / EPEC), this protein is Pimeloyl-[acyl-carrier protein] methyl ester esterase.